Here is a 64-residue protein sequence, read N- to C-terminus: Large ribosomal subunit protein bL33 (64 aa).

This sequence belongs to the bacterial ribosomal protein bL33 family.

The sequence is that of Large ribosomal subunit protein bL33 from Microcystis aeruginosa (strain NIES-843 / IAM M-2473).